The following is a 131-amino-acid chain: Small ribosomal subunit protein uS9 (131 aa).

It belongs to the universal ribosomal protein uS9 family.

The polypeptide is Small ribosomal subunit protein uS9 (Actinobacillus pleuropneumoniae serotype 7 (strain AP76)).